A 214-amino-acid polypeptide reads, in one-letter code: Cytochrome c biogenesis ATP-binding export protein CcmA (214 aa).

Residues 12–214 (LAAHDLAFSR…TRMLTLEVAA (203 aa)) enclose the ABC transporter domain. 44–51 (GDNGAGKT) lines the ATP pocket.

Belongs to the ABC transporter superfamily. CcmA exporter (TC 3.A.1.107) family. The complex is composed of two ATP-binding proteins (CcmA) and two transmembrane proteins (CcmB).

It localises to the cell inner membrane. It carries out the reaction heme b(in) + ATP + H2O = heme b(out) + ADP + phosphate + H(+). Its function is as follows. Part of the ABC transporter complex CcmAB involved in the biogenesis of c-type cytochromes; once thought to export heme, this seems not to be the case, but its exact role is uncertain. Responsible for energy coupling to the transport system. This Xanthomonas axonopodis pv. citri (strain 306) protein is Cytochrome c biogenesis ATP-binding export protein CcmA.